The following is a 117-amino-acid chain: Protein OPG035 (117 aa).

This sequence belongs to the poxviridae OPG035 family.

Its function is as follows. Bcl-2-like protein which contributes to virulence by preventing host NF-kappa-B activation in response to pro-inflammatory stimuli such as TNF-alpha or IL1B. The sequence is that of Protein OPG035 (OPG035) from Homo sapiens (Human).